The primary structure comprises 67 residues: uncharacterized protein (67 aa).

Residues 19 to 39 (ISFIIFFFFYFFFFYFFYGFW) traverse the membrane as a helical segment.

The protein resides in the membrane. This is an uncharacterized protein from Dictyostelium discoideum (Social amoeba).